The following is a 1410-amino-acid chain: Endoribonuclease Dicer homolog 2a (1410 aa).

Residues 1-15 (MGGPLTAAGGRGDGG) show a composition bias toward gly residues. The disordered stretch occupies residues 1-30 (MGGPLTAAGGRGDGGAKAVEPLRPPPPPDP). A Helicase ATP-binding domain is found at 41 to 222 (ALERAVRGNT…HNYSKQISEI (182 aa)). 54-61 (LETGSGKT) serves as a coordination point for ATP. Positions 163–166 (DECH) match the DECH box motif. The Helicase C-terminal domain maps to 388-561 (TLLQYRHMQD…DTYYRVESTR (174 aa)). Residues 569 to 655 (SVPLIHFFCS…LPELDVPCDE (87 aa)) form the Dicer dsRNA-binding fold domain. The PAZ domain occupies 827–942 (KDIDLLQTKD…LPPELCRIIM (116 aa)). 2 consecutive RNase III domains span residues 969 to 1124 (SVKL…STAG) and 1161 to 1308 (VRSL…LDSK). Residues Glu1200, Asp1294, and Glu1297 each contribute to the Mg(2+) site. A DRBM domain is found at 1334-1400 (DPVKGLQEFC…SKAVLKDLIA (67 aa)).

It belongs to the helicase family. Dicer subfamily. May interact with ARGONAUTE1 or PINHEAD through their common PAZ domains. The cofactor is Mg(2+). It depends on Mn(2+) as a cofactor.

The protein localises to the nucleus. Functionally, probably involved in the RNA silencing pathway. May cleave double-stranded RNA to produce short 21-24 nucleotides (nt) RNAs which target the selective destruction of complementary RNAs. The protein is Endoribonuclease Dicer homolog 2a (DCL2A) of Oryza sativa subsp. japonica (Rice).